A 488-amino-acid chain; its full sequence is Inosine-5'-monophosphate dehydrogenase (488 aa).

CBS domains lie at 95 to 153 (VISN…SIKI) and 157 to 216 (MTQE…AKDE). Residues D250 and 300-302 (GIG) contribute to the NAD(+) site. K(+) is bound by residues G302 and G304. S305 provides a ligand contact to IMP. C307 serves as a coordination point for K(+). Catalysis depends on C307, which acts as the Thioimidate intermediate. IMP-binding positions include 340–342 (DGG), 363–364 (GS), and 387–391 (YRGMG). Catalysis depends on R403, which acts as the Proton acceptor. Residue E417 participates in IMP binding. The tract at residues 468–488 (GLAESHPHNIQITKESPNYSF) is disordered. The K(+) site is built by E471, S472, and H473. The span at 475–488 (HNIQITKESPNYSF) shows a compositional bias: polar residues.

Belongs to the IMPDH/GMPR family. Homotetramer. K(+) is required as a cofactor.

The enzyme catalyses IMP + NAD(+) + H2O = XMP + NADH + H(+). It participates in purine metabolism; XMP biosynthesis via de novo pathway; XMP from IMP: step 1/1. Its activity is regulated as follows. Mycophenolic acid (MPA) is a non-competitive inhibitor that prevents formation of the closed enzyme conformation by binding to the same site as the amobile flap. In contrast, mizoribine monophosphate (MZP) is a competitive inhibitor that induces the closed conformation. MPA is a potent inhibitor of mammalian IMPDHs but a poor inhibitor of the bacterial enzymes. MZP is a more potent inhibitor of bacterial IMPDH. Functionally, catalyzes the conversion of inosine 5'-phosphate (IMP) to xanthosine 5'-phosphate (XMP), the first committed and rate-limiting step in the de novo synthesis of guanine nucleotides, and therefore plays an important role in the regulation of cell growth. This Staphylococcus aureus (strain Mu50 / ATCC 700699) protein is Inosine-5'-monophosphate dehydrogenase.